The chain runs to 357 residues: MPSPADREKALVTALAQIDRQFGKGSVMRLGSDERAPVEVVPTGSIALDVALGIGGLPRGRIVEIYGPESSGKTTLTLHAIANAQRAGGIAAFIDAEHALDPDYARKLGVDIDALLVSQPDTGEQALEIADMLVRSGSIDLIVIDSVAALVPRAEIEGEMGDAHVGLQARLMSQALRKLTGALSQTNTTMIFINQLREKVGVFFGSPETTAGGKALKFYASVRLDIRRIETLKDGTDAVGNRTRVKVVKNKMAPPFKQAEFDILYGVGISHEGSLLDFGVEHALVKKSGAWYTYEGDQLGQGKENSRNFLIANPDIAAEIENKIKIKLGIVADPNADAEPTAAAGSLEEKLPARKGA.

Residue 67 to 74 participates in ATP binding; it reads GPESSGKT.

It belongs to the RecA family.

It localises to the cytoplasm. In terms of biological role, can catalyze the hydrolysis of ATP in the presence of single-stranded DNA, the ATP-dependent uptake of single-stranded DNA by duplex DNA, and the ATP-dependent hybridization of homologous single-stranded DNAs. It interacts with LexA causing its activation and leading to its autocatalytic cleavage. In Leifsonia xyli subsp. xyli (strain CTCB07), this protein is Protein RecA.